The sequence spans 506 residues: Kynurenine 3-monooxygenase (506 aa).

The interval 153–174 is disordered; that stretch reads QETSLLPGEESEKDKKQNTEDE. Over residues 162-171 the composition is skewed to basic and acidic residues; that stretch reads ESEKDKKQNT.

The protein belongs to the aromatic-ring hydroxylase family. KMO subfamily. FAD serves as cofactor.

It localises to the mitochondrion outer membrane. The enzyme catalyses L-kynurenine + NADPH + O2 + H(+) = 3-hydroxy-L-kynurenine + NADP(+) + H2O. Its pathway is cofactor biosynthesis; NAD(+) biosynthesis; quinolinate from L-kynurenine: step 1/3. Functionally, catalyzes the hydroxylation of L-kynurenine (L-Kyn) to form 3-hydroxy-L-kynurenine (L-3OHKyn). Required for synthesis of quinolinic acid. The protein is Kynurenine 3-monooxygenase of Cryptococcus neoformans var. neoformans serotype D (strain JEC21 / ATCC MYA-565) (Filobasidiella neoformans).